The sequence spans 499 residues: MDNMNHEELNDQLLVRREKLHNLREQGIDPFGKRFERTHSSKELLNLYGEFSKEELEEKAISVSIAGRIMTKRGKGKAGFAHIQDLHGQVQIYVRKDAVGDEEYELFKTADLGDLVGIEGKVFKTNVGELSVKATSFTLLTKSLRPLPDKYHGLKDIEQRYRQRYLDLITSMESRETFVTRSKIIREMRRYLDDNGYLEVETPMMHTIAGGASARPFITHHNALDMELYMRIAIELHLKRLIVGGLEKVYEIGRVFRNEGVSTRHNPEFTMIELYEAYADYKDIMKLTENMIAHIAKRVLGTTTIQYGEHEINLEPEWTRLHMVDAIKQYCGVDFWKPMSVEEARALAKEHDVEIKDTMEVGHIINEFFEQKVEEKLIQPTFIYGHPVEISPLAKKNDEDSRFTDRFELFIVAREHANAFTELNDPIDQKERFEAQLKEREQGNDEAHMMDDDYIEALEYGMPPTGGLGIGIDRLVMLLTNSPSIRDVLLFPTMRHKQD.

Mg(2+)-binding residues include Glu-408 and Glu-415.

It belongs to the class-II aminoacyl-tRNA synthetase family. In terms of assembly, homodimer. Requires Mg(2+) as cofactor.

The protein resides in the cytoplasm. It carries out the reaction tRNA(Lys) + L-lysine + ATP = L-lysyl-tRNA(Lys) + AMP + diphosphate. This is Lysine--tRNA ligase from Bacillus cytotoxicus (strain DSM 22905 / CIP 110041 / 391-98 / NVH 391-98).